Consider the following 263-residue polypeptide: 5'-nucleotidase SurE (263 aa).

The a divalent metal cation site is built by Asp8, Asp9, Ser40, and Asn93.

It belongs to the SurE nucleotidase family. It depends on a divalent metal cation as a cofactor.

Its subcellular location is the cytoplasm. The catalysed reaction is a ribonucleoside 5'-phosphate + H2O = a ribonucleoside + phosphate. In terms of biological role, nucleotidase that shows phosphatase activity on nucleoside 5'-monophosphates. This Beijerinckia indica subsp. indica (strain ATCC 9039 / DSM 1715 / NCIMB 8712) protein is 5'-nucleotidase SurE.